The chain runs to 166 residues: Putative 4-hydroxy-4-methyl-2-oxoglutarate aldolase 3 (166 aa).

A2 is subject to N-acetylalanine. Residues 81 to 84 (GGNL) and R103 contribute to the substrate site. Residue D104 coordinates a divalent metal cation.

Belongs to the class II aldolase/RraA-like family. Homotrimer. The cofactor is a divalent metal cation.

It carries out the reaction 4-hydroxy-4-methyl-2-oxoglutarate = 2 pyruvate. It catalyses the reaction oxaloacetate + H(+) = pyruvate + CO2. Its function is as follows. Catalyzes the aldol cleavage of 4-hydroxy-4-methyl-2-oxoglutarate (HMG) into 2 molecules of pyruvate. Also contains a secondary oxaloacetate (OAA) decarboxylase activity due to the common pyruvate enolate transition state formed following C-C bond cleavage in the retro-aldol and decarboxylation reactions. This is Putative 4-hydroxy-4-methyl-2-oxoglutarate aldolase 3 from Arabidopsis thaliana (Mouse-ear cress).